A 218-amino-acid chain; its full sequence is Zinc finger BED domain-containing protein 2 (218 aa).

The span at 1 to 11 shows a compositional bias: acidic residues; that stretch reads MMRREDEEEEG. The disordered stretch occupies residues 1–24; sequence MMRREDEEEEGTMMKAKGDLEMKE. A BED-type zinc finger spans residues 52–113; sequence TRFSEAWEYF…SMHREELEKS (62 aa). 4 residues coordinate Zn(2+): Cys78, Cys81, His101, and His106. The disordered stretch occupies residues 104–137; sequence SMHREELEKSGHGQAGQRQDPRPHGPQLPTGIEG. Basic and acidic residues predominate over residues 105–114; that stretch reads MHREELEKSG.

In terms of tissue distribution, expressed in keratinocytes.

It localises to the nucleus. Functionally, transcriptional regulator which has intrinsic repressor activity and which competes with the transcriptional activator IRF1 for binding to the 5'-[CA]GAA[AC]C[CT]-3' consensus sequence in gene promoters. May thereby play a role in keratinocyte differentiation. The chain is Zinc finger BED domain-containing protein 2 (ZBED2) from Homo sapiens (Human).